We begin with the raw amino-acid sequence, 642 residues long: Uromodulin (642 aa).

The first 26 residues, 1 to 26 (MGQLSSLTSVWMVVVVTSWVIIAANI), serve as a signal peptide directing secretion. Positions 32–64 (RSCSECHSNATCMEDGMVTTCSCLVGFTGSGFE) constitute an EGF-like 1 domain. 21 disulfides stabilise this stretch: Cys34–Cys43, Cys37–Cys52, Cys54–Cys65, Cys71–Cys85, Cys79–Cys94, Cys96–Cys108, Cys114–Cys128, Cys122–Cys137, Cys139–Cys150, Cys152–Cys163, Cys157–Cys172, Cys176–Cys269, Cys197–Cys284, Cys219–Cys257, Cys225–Cys289, Cys250–Cys258, Cys299–Cys308, Cys302–Cys317, Cys319–Cys348, Cys336–Cys426, and Cys367–Cys390. N-linked (GlcNAc...) asparagine glycosylation occurs at Asn40. Residues 67 to 109 (DLDECAIPGAHNCSEGSSCMNTLGSYLCTCPDGFRLTPGLGCI) form the EGF-like 2; calcium-binding domain. N-linked (GlcNAc...) asparagine glycosylation occurs at Asn78. An EGF-like 3; calcium-binding domain is found at 110 to 151 (DVDECSEPGLSRCHALATCINNKGNYSCVCPAGYRGDGQHCE). An N-linked (GlcNAc...) asparagine glycan is attached at Asn134. The segment at 152–173 (CSPGSCGPGLDCVPVGDALVCA) is beta hairpin. The tract at residues 174-293 (DPCQEHRILD…CYLAYCTDPT (120 aa)) is D10C. N-linked (GlcNAc...) asparagine glycosylation is found at Asn234 and Asn246. Asn277 is a glycosylation site (N-linked (GlcNAc...) asparagine). Residues 294–325 (SVLGTCEECSVEEDCKSHDGMWSCQCKQDFNV) enclose the EGF-like 4 domain. N-linked (GlcNAc...) asparagine glycosylation is present at Asn324. The ZP-N stretch occupies residues 335 to 430 (ECRPNDIKVS…KINFECSYPL (96 aa)). A ZP domain is found at 335-590 (ECRPNDIKVS…PTCSGTRFRS (256 aa)). N-linked (GlcNAc...) asparagine glycosylation is found at Asn397 and Asn448. A flexible ZP-N/ZP-C linker; important for secretion and polymerization into filaments region spans residues 431–454 (DMKVSLETSLQPIVSSLNISVGGT). The internal hydrophobic patch (IHP) stretch occupies residues 455-465 (GMFTVRMALFQ). The tract at residues 455 to 590 (GMFTVRMALF…PTCSGTRFRS (136 aa)) is ZP-C. Disulfide bonds link Cys507–Cys567, Cys528–Cys583, and Cys572–Cys579. The N-linked (GlcNAc...) asparagine glycan is linked to Asn514. The interval 587 to 590 (RFRS) is essential for cleavage by HPN. Residues 599–607 (VLNLGPITR) form an external hydrophobic patch (EHP); regulates polymerization into filaments region. The GPI-anchor amidated serine moiety is linked to residue Ser620. The propeptide at 621–642 (SLGFLKVCLPLLLSATLTLMFQ) is removed in mature form.

Homodimer that then polymerizes into long filaments. The filaments can additionally assemble laterally to form a sheet. The filaments consist of a zigzag-shaped backbone with laterally protruding arms which interact with bacterial adhesin fimH. Two fimH molecules can bind to a single UMOD monomer. In terms of processing, N-glycosylated. Proteolytically cleaved at a conserved C-terminal proteolytic cleavage site to generate the secreted form found in urine. This cleavage is catalyzed by HPN. Detected in kidney and pancreas.

Its subcellular location is the apical cell membrane. The protein resides in the basolateral cell membrane. It is found in the cell projection. The protein localises to the cilium membrane. It localises to the secreted. Functionally, functions in biogenesis and organization of the apical membrane of epithelial cells of the thick ascending limb of Henle's loop (TALH), where it promotes formation of complex filamentous gel-like structure that may play a role in the water barrier permeability. May serve as a receptor for binding and endocytosis of cytokines (IL-1, IL-2) and TNF. Facilitates neutrophil migration across renal epithelia. In terms of biological role, in the urine, may contribute to colloid osmotic pressure, retards passage of positively charged electrolytes, and inhibits formation of liquid containing supersaturated salts and subsequent formation of salt crystals. Protects against urinary tract infections by binding to type 1 fimbriated E.coli. Binds to bacterial adhesin fimH which mediates the stable formation of bacterial aggregates, prevents the binding of E.coli to uroplakins UPK1A and UPK1B which act as urothelial receptors for type I fimbriae, and allows for pathogen clearance through micturation. Also promotes aggregation of other bacteria including K.pneumoniae, P.aeruginosa and S.mitis and so may also protect against other uropathogens. In Canis lupus familiaris (Dog), this protein is Uromodulin (UMOD).